A 338-amino-acid chain; its full sequence is tRNA N6-adenosine threonylcarbamoyltransferase (338 aa).

2 residues coordinate Fe cation: His-111 and His-115. Substrate-binding positions include 134-138 (LVSGG), Asp-167, Gly-180, and Asn-272. Asp-300 is a binding site for Fe cation.

Belongs to the KAE1 / TsaD family. Requires Fe(2+) as cofactor.

Its subcellular location is the cytoplasm. It catalyses the reaction L-threonylcarbamoyladenylate + adenosine(37) in tRNA = N(6)-L-threonylcarbamoyladenosine(37) in tRNA + AMP + H(+). Its function is as follows. Required for the formation of a threonylcarbamoyl group on adenosine at position 37 (t(6)A37) in tRNAs that read codons beginning with adenine. Is involved in the transfer of the threonylcarbamoyl moiety of threonylcarbamoyl-AMP (TC-AMP) to the N6 group of A37, together with TsaE and TsaB. TsaD likely plays a direct catalytic role in this reaction. This Shewanella pealeana (strain ATCC 700345 / ANG-SQ1) protein is tRNA N6-adenosine threonylcarbamoyltransferase.